The sequence spans 397 residues: MFPTDPVSNLATLIRCPSVTPAEGGALTALESMLTPIGFKADRIVAREAGTPDIENLYARIGVGGPHLMFAGHTDVVPVGDEIAWSHPPFSAAIAEGEMYGRGAVDMKGGIACFVAAVARHIEKHGAPKGSISFLITGDEEGPAINGTVKLLEWAAAKGERWDACLVGEPTNPGGIGEMIKIGRRGSLSGRITVQGVQGHAAYPHLADNPVRSILQLAHALMDPPFDDGTENFQPSNLEVTTIDVGNAAVNVIPAKASAAFNVRFNDLWTAESLMTEIVARLDRAASAGALRPGRAPVKYEIVWNERPSHVFLTRNDALIESLSGAVEAVTGQQPRLSTTGGTSDARFIKDYCPVVEFGLVGKTMHMVDERVALADLETLTGIYETFIARWFDHAAA.

H73 lines the Zn(2+) pocket. The active site involves D75. Zn(2+) is bound at residue D106. E140 acts as the Proton acceptor in catalysis. The Zn(2+) site is built by E141, E169, and H366.

Belongs to the peptidase M20A family. DapE subfamily. Homodimer. Zn(2+) is required as a cofactor. The cofactor is Co(2+).

The catalysed reaction is N-succinyl-(2S,6S)-2,6-diaminopimelate + H2O = (2S,6S)-2,6-diaminopimelate + succinate. Its pathway is amino-acid biosynthesis; L-lysine biosynthesis via DAP pathway; LL-2,6-diaminopimelate from (S)-tetrahydrodipicolinate (succinylase route): step 3/3. Functionally, catalyzes the hydrolysis of N-succinyl-L,L-diaminopimelic acid (SDAP), forming succinate and LL-2,6-diaminopimelate (DAP), an intermediate involved in the bacterial biosynthesis of lysine and meso-diaminopimelic acid, an essential component of bacterial cell walls. The chain is Succinyl-diaminopimelate desuccinylase from Sinorhizobium medicae (strain WSM419) (Ensifer medicae).